A 4158-amino-acid polypeptide reads, in one-letter code: Dynein axonemal heavy chain 6 (4158 aa).

Positions 1–1433 (MTFRATDSEF…VARMALSQYT (1433 aa)) are stem. ATP is bound at residue 192-199 (IIRENEHL). A coiled-coil region spans residues 805 to 859 (CVHLGSDLEELNNEVNEVKLQAQDPQILDISADQDKIRLILNNLQSVLADLQKRA). AAA regions lie at residues 1434–1655 (YGYE…VLVM), 1715–1948 (STIV…KKCS), 2058–2306 (KYNR…CVQG), and 2408–2659 (DYNL…LRRR). ATP-binding positions include 1472–1479 (GPAGTGKT), 1753–1760 (GPTGGGKT), 2096–2103 (GITGVGKS), and 2447–2454 (GVGGTGKQ). The stalk stretch occupies residues 2676-2961 (SMLSEKRKQI…KTMALTKARL (286 aa)). Residues 2901–2996 (KRQKLRAAQA…EEISNITGNV (96 aa)) are a coiled coil. 2 AAA regions span residues 3042-3272 (LGDP…AIKT) and 3509-3730 (LTDF…NLKL).

The protein belongs to the dynein heavy chain family. As to quaternary structure, the dynein complex consists of at least two heavy chains and a number of intermediate and light chains. Expressed in several tissues, including brain, pituitary, testis and trachea, with highest levels in testis.

The protein localises to the cytoplasm. It localises to the cytoskeleton. Its subcellular location is the cilium axoneme. Its function is as follows. Force generating protein of respiratory cilia. Produces force towards the minus ends of microtubules. Dynein has ATPase activity; the force-producing power stroke is thought to occur on release of ADP. The sequence is that of Dynein axonemal heavy chain 6 from Homo sapiens (Human).